Consider the following 245-residue polypeptide: 1-(5-phosphoribosyl)-5-[(5-phosphoribosylamino)methylideneamino] imidazole-4-carboxamide isomerase (245 aa).

D7 (proton acceptor) is an active-site residue. The active-site Proton donor is the D129.

It belongs to the HisA/HisF family.

The protein localises to the cytoplasm. It carries out the reaction 1-(5-phospho-beta-D-ribosyl)-5-[(5-phospho-beta-D-ribosylamino)methylideneamino]imidazole-4-carboxamide = 5-[(5-phospho-1-deoxy-D-ribulos-1-ylimino)methylamino]-1-(5-phospho-beta-D-ribosyl)imidazole-4-carboxamide. Its pathway is amino-acid biosynthesis; L-histidine biosynthesis; L-histidine from 5-phospho-alpha-D-ribose 1-diphosphate: step 4/9. This chain is 1-(5-phosphoribosyl)-5-[(5-phosphoribosylamino)methylideneamino] imidazole-4-carboxamide isomerase, found in Shewanella amazonensis (strain ATCC BAA-1098 / SB2B).